Reading from the N-terminus, the 283-residue chain is Peflin (283 aa).

8 repeat units span residues 21 to 30, 36 to 44, 45 to 54, 55 to 62, 71 to 79, 80 to 87, 88 to 95, and 96 to 104. The interval 21–104 is 8 X 9 AA approximate tandem repeat of [AP]-P-G-G-P-Y-G-G-P-P; sequence PQTNYYGGQQ…SQQHGSYGQG (84 aa). Low complexity predominate over residues 37 to 70; that stretch reads PAASYGRPAPGAPYGSPPSGGVYGHPVPGSAAPG. Residues 37–113 are disordered; sequence PAASYGRPAP…GAPAGNIPPG (77 aa). The span at 71 to 81 shows a compositional bias: gly residues; it reads APGGPYGGQAP. Residues 93 to 104 are compositionally biased toward low complexity; the sequence is YGSQQHGSYGQG. EF-hand domains follow at residues 113–148, 154–179, 180–215, 216–252, and 253–282; these read GVDP…TNWS, TCTM…SALW, RFIQ…MGYQ, LSPQ…LQSM, and TEAF…TTRL. Residues aspartate 126, aspartate 128, serine 130, tyrosine 132, and glutamate 137 each coordinate Ca(2+). Ca(2+)-binding residues include aspartate 193, aspartate 195, serine 197, serine 199, and glutamate 204.

In terms of assembly, heterodimer; heterodimerizes (via the EF-hand 5) with pdcd6.

The protein resides in the cytoplasm. Its subcellular location is the endoplasmic reticulum. The protein localises to the membrane. It localises to the cytoplasmic vesicle. It is found in the COPII-coated vesicle membrane. Its function is as follows. Calcium-binding protein that acts as an adapter that bridges unrelated proteins or stabilizes weak protein-protein complexes in response to calcium. Acts as a negative regulator of ER-Golgi transport. The protein is Peflin of Xenopus laevis (African clawed frog).